A 573-amino-acid polypeptide reads, in one-letter code: Isocitrate dehydrogenase kinase/phosphatase (573 aa).

ATP-binding positions include 317–323 (APGVRGM) and K338. D373 is a catalytic residue.

Belongs to the AceK family.

The protein localises to the cytoplasm. The catalysed reaction is L-seryl-[isocitrate dehydrogenase] + ATP = O-phospho-L-seryl-[isocitrate dehydrogenase] + ADP + H(+). Its function is as follows. Bifunctional enzyme which can phosphorylate or dephosphorylate isocitrate dehydrogenase (IDH) on a specific serine residue. This is a regulatory mechanism which enables bacteria to bypass the Krebs cycle via the glyoxylate shunt in response to the source of carbon. When bacteria are grown on glucose, IDH is fully active and unphosphorylated, but when grown on acetate or ethanol, the activity of IDH declines drastically concomitant with its phosphorylation. This Pseudomonas fluorescens (strain ATCC BAA-477 / NRRL B-23932 / Pf-5) protein is Isocitrate dehydrogenase kinase/phosphatase.